A 563-amino-acid chain; its full sequence is MKSDLEIAREAHLDPIEKVAARAGIDEKYLEPYGRGVAKVDLDVVTHNRDHSCGKYVVVTAMTPTPLGEGKTTTAVGLAQGLEKIGKHSVLALRQPSMGPTFGIKGGAAGAGYSQVLPMEKLNLHLTGDFHAIGAAHNLLAAMIDNHLHQGNELDIEPHSISWRRVVDINDRALRNTIVGLGSRVDGVPRETGFDITAASEVGVILSLATSLSDLRARLGRIVIGYNRSKEPVSAEDLHAAGSMAVILKDALKPNLLQTTENSPVLVHAGPFGNIATGNSSVIADRVGIGCGDYLLTEAGFGADMGAERFFNIKCRIGGMRPDAAVLVATVRALKTHAGRYKVIPGKPLPPAMLEDNPDDVLAGAANLRKHIEIVREFGVSPIVALNVFPTDHPDEIDAVRKVAEAAGAHFASSTHVVDGGDGAVDLAHAVVAACDHKADFRYTYDLEDSLVEKLTKVATKVYGADGIDIAPAAAKELAHFEDLGYGTFPVVIAKTHLSLSHDPSLKGAPTGWRLPVREVRAAVGAGYIYAICGDMRTMPGLGRHPAAERIDIDDNGETIGLF.

An ATP-binding site is contributed by 65 to 72 (TPLGEGKT).

This sequence belongs to the formate--tetrahydrofolate ligase family.

The enzyme catalyses (6S)-5,6,7,8-tetrahydrofolate + formate + ATP = (6R)-10-formyltetrahydrofolate + ADP + phosphate. The protein operates within one-carbon metabolism; tetrahydrofolate interconversion. This chain is Formate--tetrahydrofolate ligase, found in Cutibacterium acnes (strain DSM 16379 / KPA171202) (Propionibacterium acnes).